Reading from the N-terminus, the 172-residue chain is Large ribosomal subunit protein uL10 (172 aa).

The protein belongs to the universal ribosomal protein uL10 family. Part of the ribosomal stalk of the 50S ribosomal subunit. The N-terminus interacts with L11 and the large rRNA to form the base of the stalk. The C-terminus forms an elongated spine to which L12 dimers bind in a sequential fashion forming a multimeric L10(L12)X complex.

Its function is as follows. Forms part of the ribosomal stalk, playing a central role in the interaction of the ribosome with GTP-bound translation factors. This Bartonella tribocorum (strain CIP 105476 / IBS 506) protein is Large ribosomal subunit protein uL10.